We begin with the raw amino-acid sequence, 1213 residues long: tRNA wybutosine-synthesizing protein 4 (1213 aa).

Low complexity-rich tracts occupy residues 1–13 (METT…PATT) and 39–52 (ATTT…TTPT). Positions 1-76 (METTEEVVAP…DDQVMGTNNS (76 aa)) are disordered. Residues 53 to 67 (HNEHASAKDPRKAQD) are compositionally biased toward basic and acidic residues. S-adenosyl-L-methionine-binding residues include Arg117, Gly148, and Asp180. Low complexity predominate over residues 215–248 (STPAATTTAAATTTTTTELKTTAATASSTSTEAP). Residues 215–272 (STPAATTTAAATTTTTTELKTTAATASSTSTEAPQKPKKSPKPKDKSKAARAPAPTTA) are disordered. Residues 289 to 290 (DL) and Glu318 each bind S-adenosyl-L-methionine. The tract at residues 879–900 (EPRSLPLRNQAPNGAEGNANGS) is disordered. The JmjC domain maps to 1006 to 1166 (PTEKPAVLSD…YAAGKDVYGN (161 aa)).

It belongs to the methyltransferase superfamily. LCMT family.

The enzyme catalyses 7-[(3S)-3-amino-3-carboxypropyl]wyosine(37) in tRNA(Phe) + S-adenosyl-L-methionine = 7-[(3S)-(3-amino-3-methoxycarbonyl)propyl]wyosine(37) in tRNA(Phe) + S-adenosyl-L-homocysteine. It carries out the reaction 7-[(3S)-(3-amino-3-methoxycarbonyl)propyl]wyosine(37) in tRNA(Phe) + S-adenosyl-L-methionine + CO2 = wybutosine(37) in tRNA(Phe) + S-adenosyl-L-homocysteine + 2 H(+). Its pathway is tRNA modification; wybutosine-tRNA(Phe) biosynthesis. Functionally, probable S-adenosyl-L-methionine-dependent methyltransferase that acts as a component of the wybutosine biosynthesis pathway. Wybutosine is a hyper modified guanosine with a tricyclic base found at the 3'-position adjacent to the anticodon of eukaryotic phenylalanine tRNA. May methylate the carboxyl group of leucine residues to form alpha-leucine ester residues. The chain is tRNA wybutosine-synthesizing protein 4 (lcm-2) from Neurospora crassa (strain ATCC 24698 / 74-OR23-1A / CBS 708.71 / DSM 1257 / FGSC 987).